The primary structure comprises 160 residues: NADH-quinone oxidoreductase subunit B (160 aa).

[4Fe-4S] cluster is bound by residues C39, C40, C104, and C135.

It belongs to the complex I 20 kDa subunit family. NDH-1 is composed of 14 different subunits. Subunits NuoB, C, D, E, F, and G constitute the peripheral sector of the complex. The cofactor is [4Fe-4S] cluster.

The protein localises to the cell membrane. The enzyme catalyses a quinone + NADH + 5 H(+)(in) = a quinol + NAD(+) + 4 H(+)(out). Its function is as follows. NDH-1 shuttles electrons from NADH, via FMN and iron-sulfur (Fe-S) centers, to quinones in the respiratory chain. The immediate electron acceptor for the enzyme in this species is believed to be a menaquinone. Couples the redox reaction to proton translocation (for every two electrons transferred, four hydrogen ions are translocated across the cytoplasmic membrane), and thus conserves the redox energy in a proton gradient. The polypeptide is NADH-quinone oxidoreductase subunit B (Amoebophilus asiaticus (strain 5a2)).